Consider the following 247-residue polypeptide: UPF0280 protein MMP1236 (247 aa).

This sequence belongs to the UPF0280 family.

The polypeptide is UPF0280 protein MMP1236 (Methanococcus maripaludis (strain DSM 14266 / JCM 13030 / NBRC 101832 / S2 / LL)).